The primary structure comprises 185 residues: Elongation factor P (185 aa).

Belongs to the elongation factor P family.

Its subcellular location is the cytoplasm. The protein operates within protein biosynthesis; polypeptide chain elongation. Its function is as follows. Involved in peptide bond synthesis. Stimulates efficient translation and peptide-bond synthesis on native or reconstituted 70S ribosomes in vitro. Probably functions indirectly by altering the affinity of the ribosome for aminoacyl-tRNA, thus increasing their reactivity as acceptors for peptidyl transferase. The polypeptide is Elongation factor P (Synechococcus sp. (strain JA-3-3Ab) (Cyanobacteria bacterium Yellowstone A-Prime)).